The primary structure comprises 542 residues: Mitogen-activated protein kinase 14 (542 aa).

The Protein kinase domain maps to 13-304 (YKIEEVIGKG…AEEALADPYF (292 aa)). ATP-binding positions include 19–27 (IGKGSYGVV) and K42. D139 serves as the catalytic Proton acceptor. T175 carries the post-translational modification Phosphothreonine. Residues 175–177 (TDY) carry the TXY motif. Y177 carries the post-translational modification Phosphotyrosine. 2 disordered regions span residues 388–412 (STAA…DNRP) and 482–542 (RNPA…SGHW). Polar residues predominate over residues 488–507 (PNSSVPLGSSYPRRNQTCKS).

The protein belongs to the protein kinase superfamily. CMGC Ser/Thr protein kinase family. MAP kinase subfamily. Dually phosphorylated on Thr-175 and Tyr-177, which activates the enzyme.

It carries out the reaction L-seryl-[protein] + ATP = O-phospho-L-seryl-[protein] + ADP + H(+). The enzyme catalyses L-threonyl-[protein] + ATP = O-phospho-L-threonyl-[protein] + ADP + H(+). Its activity is regulated as follows. Activated by threonine and tyrosine phosphorylation. This chain is Mitogen-activated protein kinase 14 (MPK14), found in Oryza sativa subsp. japonica (Rice).